Here is a 535-residue protein sequence, read N- to C-terminus: Peptide chain release factor 3 (535 aa).

Positions 8–277 constitute a tr-type G domain; the sequence is KRRRTFAIIS…TLVELAPPPG (270 aa). GTP contacts are provided by residues 17-24, 85-89, and 139-142; these read SHPDAGKT, DTPGH, and NKLD.

The protein belongs to the TRAFAC class translation factor GTPase superfamily. Classic translation factor GTPase family. PrfC subfamily.

It localises to the cytoplasm. In terms of biological role, increases the formation of ribosomal termination complexes and stimulates activities of RF-1 and RF-2. It binds guanine nucleotides and has strong preference for UGA stop codons. It may interact directly with the ribosome. The stimulation of RF-1 and RF-2 is significantly reduced by GTP and GDP, but not by GMP. The protein is Peptide chain release factor 3 of Nitrosomonas europaea (strain ATCC 19718 / CIP 103999 / KCTC 2705 / NBRC 14298).